Consider the following 562-residue polypeptide: Protein wntless (562 aa).

Residues 1–13 (MSGTILENLSGRK) are Cytoplasmic-facing. Residues 14–34 (LSILVASLLLCQVFCFLLGGL) traverse the membrane as a helical segment. Topologically, residues 35 to 239 (YAPLPAGHVT…AIHQNGGFTQ (205 aa)) are lumenal. N-linked (GlcNAc...) asparagine glycosylation is present at Asn58. Residues 240-260 (IWLMLKTVLFPFVVGIMIWFW) form a helical membrane-spanning segment. Residues 261–270 (RRVHLLQRSP) are Cytoplasmic-facing. Residues 271–291 (ALLEYMLIYLGGALTFLNLPL) traverse the membrane as a helical segment. Residues 292-311 (EYLSLVVEMPYMLLLSDIRQ) are Lumenal-facing. A helical membrane pass occupies residues 312-332 (GIFYAMLLSFWLVFAGEHMLI). Residues 333–344 (QDAPNKSTIRSR) are Cytoplasmic-facing. The chain crosses the membrane as a helical span at residues 345 to 365 (YWKHLSAVVVGCISLFVFDIC). Residues 366–390 (ERGVQLRNPFYSIWTTPLGAKVAMT) lie on the Lumenal side of the membrane. The chain crosses the membrane as a helical span at residues 391-411 (FIILAGVSAAIYFLFLCYMIW). Over 412–441 (KVFRNIGDKRTSLPSMSQARRLHYEGLIYR) the chain is Cytoplasmic. Residues 442-462 (FKFLMLATLLCAALTVAGFIM) form a helical membrane-spanning segment. The Lumenal segment spans residues 463–482 (GQMAEGQWQWNDNVEIQLTS). The chain crosses the membrane as a helical span at residues 483–503 (AFLTGVYGMWNIYIFALLILY). The Cytoplasmic portion of the chain corresponds to 504-562 (APSHKQWPTMHHSDETTQSNENIVASAASEEIEFSHLPSDSNPSEISSLTSFTRKVAFD). The disordered stretch occupies residues 539–562 (HLPSDSNPSEISSLTSFTRKVAFD). Polar residues predominate over residues 541–556 (PSDSNPSEISSLTSFT).

The protein belongs to the wntless family. In terms of assembly, interacts with wg; in the Golgi. Interacts with Vps35, a component of the retromer complex; wls stability is regulated by Vps35.

The protein resides in the presynaptic cell membrane. It localises to the postsynaptic cell membrane. It is found in the cell membrane. The protein localises to the endoplasmic reticulum membrane. Its subcellular location is the endosome membrane. The protein resides in the golgi apparatus membrane. Its function is as follows. A segment polarity gene required for wingless (wg)-dependent patterning processes, acting in both wg-sending cells and wg-target cells. In non-neuronal cells wls directs wg secretion. The wls traffic loop encompasses the Golgi, the cell surface, an endocytic compartment and a retrograde route leading back to the Golgi, and involves clathrin-mediated endocytosis and the retromer complex (a conserved protein complex consisting of Vps35 and Vps26). In neuronal cells (the larval motorneuron NMJ), the wg signal moves across the synapse via the release of wls-containing exosome-like vesicles. Postsynaptic wls is required for the trafficking of fz2 through the fz2-interacting protein Grip. This chain is Protein wntless, found in Drosophila ananassae (Fruit fly).